The sequence spans 702 residues: Cell adhesion molecule CEACAM5 (702 aa).

The first 34 residues, 1-34 (MESPSAPPHRWCIPWQRLLLTASLLTFWNPPTTA), serve as a signal peptide directing secretion. An Ig-like V-type domain is found at 35-144 (KLTIESTPFN…TGQFRVYPEL (110 aa)). Asn-104, Asn-115, Asn-152, Asn-182, Asn-197, Asn-204, Asn-208, Asn-246, Asn-256, Asn-274, Asn-288, Asn-292, Asn-309, Asn-330, Asn-351, Asn-360, Asn-375, Asn-432, Asn-466, Asn-480, Asn-508, Asn-529, Asn-553, Asn-560, Asn-580, Asn-612, Asn-650, and Asn-665 each carry an N-linked (GlcNAc...) asparagine glycan. 6 consecutive Ig-like C2-type domains span residues 145-232 (PKPS…VILN), 240-315 (PTIS…TVTT), 323-410 (PKPF…VILN), 418-495 (PTIS…KTIT), 501-588 (PKPS…VTLD), and 593-675 (PDTP…ITVS). The cysteines at positions 167 and 215 are disulfide-linked. A disulfide bond links Cys-259 and Cys-299. Cys-345 and Cys-393 are disulfide-bonded. Cys-437 and Cys-477 form a disulfide bridge. A disulfide bond links Cys-523 and Cys-571. Cys-615 and Cys-655 are oxidised to a cystine. Ala-685 is lipidated: GPI-anchor amidated alanine. Residues 686 to 702 (GATVGIMIGVLVGVALI) constitute a propeptide, removed in mature form.

It belongs to the immunoglobulin superfamily. CEA family. As to quaternary structure, homodimer. In terms of processing, complex immunoreactive glycoprotein with a MW of 180 kDa comprising 60% carbohydrate. In terms of tissue distribution, expressed in columnar epithelial and goblet cells of the colon (at protein level). Found in adenocarcinomas of endodermally derived digestive system epithelium and fetal colon.

Its subcellular location is the cell membrane. The protein localises to the apical cell membrane. It is found in the cell surface. Functionally, cell surface glycoprotein that plays a role in cell adhesion, intracellular signaling and tumor progression. Mediates homophilic and heterophilic cell adhesion with other carcinoembryonic antigen-related cell adhesion molecules, such as CEACAM6. Plays a role as an oncogene by promoting tumor progression; induces resistance to anoikis of colorectal carcinoma cells. In terms of biological role, (Microbial infection) Receptor for E.coli Dr adhesins. Binding of E.coli Dr adhesins leads to dissociation of the homodimer. The protein is Cell adhesion molecule CEACAM5 of Homo sapiens (Human).